Here is a 296-residue protein sequence, read N- to C-terminus: Cobalamin trafficking protein CblD (296 aa).

The N-terminal 38 residues, methionine 1–glycine 38, are a transit peptide targeting the mitochondrion. Lysine 203 carries the post-translational modification N6-acetyllysine.

Heterodimer with MMACHC. Forms a multiprotein complex with MMACHC, MTR and MTRR.

The protein resides in the cytoplasm. It localises to the mitochondrion. Involved in cobalamin metabolism and trafficking. Plays a role in regulating the biosynthesis and the proportion of two coenzymes, methylcob(III)alamin (MeCbl) and 5'-deoxyadenosylcobalamin (AdoCbl). Promotes oxidation of cob(II)alamin bound to MMACHC. The processing of cobalamin in the cytosol occurs in a multiprotein complex composed of at least MMACHC, MMADHC, MTRR (methionine synthase reductase) and MTR (methionine synthase) which may contribute to shuttle safely and efficiently cobalamin towards MTR in order to produce methionine. This is Cobalamin trafficking protein CblD (Mmadhc) from Rattus norvegicus (Rat).